Here is a 367-residue protein sequence, read N- to C-terminus: Mitogen-activated protein kinase 12 (367 aa).

The region spanning 27-311 (YQDLQPVGSG…AAEALTHPYF (285 aa)) is the Protein kinase domain. Residues 33-41 (VGSGAYGAV) and Lys56 contribute to the ATP site. Catalysis depends on Asp153, which acts as the Proton acceptor. Thr183 bears the Phosphothreonine mark. The TXY signature appears at 183-185 (TGY). A Phosphotyrosine modification is found at Tyr185.

Belongs to the protein kinase superfamily. CMGC Ser/Thr protein kinase family. MAP kinase subfamily. Monomer. Interacts with the PDZ domain of the syntrophin SNTA1. Interacts with SH3BP5, LIN7C, SCRIB and SYNJ2BP. Interacts with PTPN4; this interaction induces the activation of PTPN4 phosphatase activity. It depends on Mg(2+) as a cofactor. Dually phosphorylated on Thr-183 and Tyr-185 by MAP2K3/MKK3 and MAP2K6/MKK6, which activates the enzyme. In terms of processing, ubiquitinated. Ubiquitination leads to degradation by the proteasome pathway. As to expression, highly expressed in skeletal muscle. Also expressed in the heart, particularly in cardiac myocytes, lung, thymus and testes.

It localises to the cytoplasm. The protein localises to the nucleus. Its subcellular location is the mitochondrion. The catalysed reaction is L-seryl-[protein] + ATP = O-phospho-L-seryl-[protein] + ADP + H(+). It carries out the reaction L-threonyl-[protein] + ATP = O-phospho-L-threonyl-[protein] + ADP + H(+). Its activity is regulated as follows. Activated by phosphorylation on threonine and tyrosine. MAP2K3/MKK3 and MAP2K6/MKK6 are both essential for the activation of MAPK12 induced by environmental stress, whereas MAP2K6/MKK6 is the major MAPK12 activator in response to TNF-alpha. Functionally, serine/threonine kinase which acts as an essential component of the MAP kinase signal transduction pathway. MAPK12 is one of the four p38 MAPKs which play an important role in the cascades of cellular responses evoked by extracellular stimuli such as pro-inflammatory cytokines or physical stress leading to direct activation of transcription factors such as ELK1 and ATF2. Accordingly, p38 MAPKs phosphorylate a broad range of proteins and it has been estimated that they may have approximately 200 to 300 substrates each. Some of the targets are downstream kinases such as MAPKAPK2, which are activated through phosphorylation and further phosphorylate additional targets. Plays a role in myoblast differentiation and also in the down-regulation of cyclin D1 in response to hypoxia in adrenal cells suggesting MAPK12 may inhibit cell proliferation while promoting differentiation. Phosphorylates DLG1. Following osmotic shock, MAPK12 in the cell nucleus increases its association with nuclear DLG1, thereby causing dissociation of DLG1-SFPQ complexes. This function is independent of its catalytic activity and could affect mRNA processing and/or gene transcription to aid cell adaptation to osmolarity changes in the environment. Regulates UV-induced checkpoint signaling and repair of UV-induced DNA damage and G2 arrest after gamma-radiation exposure. MAPK12 is involved in the regulation of SLC2A1 expression and basal glucose uptake in L6 myotubes; and negatively regulates SLC2A4 expression and contraction-mediated glucose uptake in adult skeletal muscle. C-Jun (JUN) phosphorylation is stimulated by MAPK14 and inhibited by MAPK12, leading to a distinct AP-1 regulation. MAPK12 is required for the normal kinetochore localization of PLK1, prevents chromosomal instability and supports mitotic cell viability. MAPK12-signaling is also positively regulating the expansion of transient amplifying myogenic precursor cells during muscle growth and regeneration. The polypeptide is Mitogen-activated protein kinase 12 (Mapk12) (Mus musculus (Mouse)).